A 360-amino-acid chain; its full sequence is Histidinol-phosphate aminotransferase (360 aa).

K218 is modified (N6-(pyridoxal phosphate)lysine).

The protein belongs to the class-II pyridoxal-phosphate-dependent aminotransferase family. Histidinol-phosphate aminotransferase subfamily. Homodimer. Requires pyridoxal 5'-phosphate as cofactor.

It carries out the reaction L-histidinol phosphate + 2-oxoglutarate = 3-(imidazol-4-yl)-2-oxopropyl phosphate + L-glutamate. Its pathway is amino-acid biosynthesis; L-histidine biosynthesis; L-histidine from 5-phospho-alpha-D-ribose 1-diphosphate: step 7/9. The sequence is that of Histidinol-phosphate aminotransferase from Chlorobium phaeobacteroides (strain DSM 266 / SMG 266 / 2430).